A 691-amino-acid chain; its full sequence is Elongation factor G (691 aa).

Positions 8–282 constitute a tr-type G domain; that stretch reads ERVRNIGIAA…AVVDYLPAPI (275 aa). Residues 17–24, 81–85, and 135–138 contribute to the GTP site; these read AHIDAGKT, DTPGH, and NKMD.

Belongs to the TRAFAC class translation factor GTPase superfamily. Classic translation factor GTPase family. EF-G/EF-2 subfamily.

The protein resides in the cytoplasm. Functionally, catalyzes the GTP-dependent ribosomal translocation step during translation elongation. During this step, the ribosome changes from the pre-translocational (PRE) to the post-translocational (POST) state as the newly formed A-site-bound peptidyl-tRNA and P-site-bound deacylated tRNA move to the P and E sites, respectively. Catalyzes the coordinated movement of the two tRNA molecules, the mRNA and conformational changes in the ribosome. In Thermosynechococcus vestitus (strain NIES-2133 / IAM M-273 / BP-1), this protein is Elongation factor G.